The sequence spans 234 residues: Heme-copper oxidase subunit 2 (234 aa).

The next 2 helical transmembrane spans lie at 13–33 and 72–92; these read LFLL…AFFI and LLFV…DETL. The Cu cation site is built by H151, C188, C192, and H196.

It belongs to the cytochrome c oxidase subunit 2 family.

It localises to the cell membrane. The polypeptide is Heme-copper oxidase subunit 2 (aoxA) (Aeropyrum pernix (strain ATCC 700893 / DSM 11879 / JCM 9820 / NBRC 100138 / K1)).